Consider the following 272-residue polypeptide: Putative phosphoenolpyruvate synthase regulatory protein (272 aa).

152-159 (GVSRSGKT) is a binding site for ADP.

This sequence belongs to the pyruvate, phosphate/water dikinase regulatory protein family. PSRP subfamily.

It catalyses the reaction [pyruvate, water dikinase] + ADP = [pyruvate, water dikinase]-phosphate + AMP + H(+). The enzyme catalyses [pyruvate, water dikinase]-phosphate + phosphate + H(+) = [pyruvate, water dikinase] + diphosphate. In terms of biological role, bifunctional serine/threonine kinase and phosphorylase involved in the regulation of the phosphoenolpyruvate synthase (PEPS) by catalyzing its phosphorylation/dephosphorylation. The chain is Putative phosphoenolpyruvate synthase regulatory protein from Alcanivorax borkumensis (strain ATCC 700651 / DSM 11573 / NCIMB 13689 / SK2).